Consider the following 134-residue polypeptide: MTLNIRIIAPDRTVWDAEAQEIILPSSTGQLGILTGHAPLLTALDIGVMRVRVDKEWMPIVLLGGFAEIENNQLTILVNGAEEASQIDLSEAEKNLDTATQLLSDASSNKEKIEATQKIRKARARVQAATAATS.

This sequence belongs to the ATPase epsilon chain family. In terms of assembly, F-type ATPases have 2 components, CF(1) - the catalytic core - and CF(0) - the membrane proton channel. CF(1) has five subunits: alpha(3), beta(3), gamma(1), delta(1), epsilon(1). CF(0) has three main subunits: a, b and c.

It is found in the plastid. Its subcellular location is the chloroplast thylakoid membrane. In terms of biological role, produces ATP from ADP in the presence of a proton gradient across the membrane. This chain is ATP synthase epsilon chain, chloroplastic, found in Pyropia yezoensis (Susabi-nori).